The following is a 428-amino-acid chain: C4-dicarboxylate transport protein (428 aa).

A run of 8 helical transmembrane segments spans residues 8 to 28 (SLYFQVLTAIAIGILLGHFYP), 44 to 64 (LIKMIIAPVIFCTVVTGIAGM), 76 to 96 (VALLYFEIVSTIALIIGLIIV), 142 to 162 (IGAFASGNILQVLLFAVLFGF), 184 to 204 (VIFGIINMIMRLAPIGAFGAM), 222 to 242 (LIICFYITCILFVVLVLGSIA), 326 to 346 (IVHQITLLIVLLLSSKGAAGV), and 352 to 372 (IVLAATLSAVGHLPVAGLALI).

The protein belongs to the dicarboxylate/amino acid:cation symporter (DAACS) (TC 2.A.23) family.

Its subcellular location is the cell inner membrane. Functionally, responsible for the transport of dicarboxylates such as succinate, fumarate, and malate from the periplasm across the membrane. This Shigella dysenteriae serotype 1 (strain Sd197) protein is C4-dicarboxylate transport protein.